A 271-amino-acid polypeptide reads, in one-letter code: Co-chaperone protein DjlA (271 aa).

The Periplasmic portion of the chain corresponds to 1–6 (MQYWGK). Residues 7–31 (IIGVAVALLMGGGFWGVVLGLLIGH) form a helical membrane-spanning segment. Over 32–271 (MFDKARSRKM…ELIKQQKGFK (240 aa)) the chain is Cytoplasmic. The 67-residue stretch at 205-271 (DACNVLGVKP…ELIKQQKGFK (67 aa)) folds into the J domain.

As to quaternary structure, homodimer.

The protein resides in the cell inner membrane. In terms of biological role, regulatory DnaK co-chaperone. Direct interaction between DnaK and DjlA is needed for the induction of the wcaABCDE operon, involved in the synthesis of a colanic acid polysaccharide capsule, possibly through activation of the RcsB/RcsC phosphotransfer signaling pathway. The colanic acid capsule may help the bacterium survive conditions outside the host. This chain is Co-chaperone protein DjlA, found in Escherichia coli (strain K12).